Here is a 1088-residue protein sequence, read N- to C-terminus: RNA-directed RNA polymerase (1088 aa).

The RdRp catalytic domain occupies 501-687 (LSYGDVTRFL…AKRYIAGGKI (187 aa)).

This sequence belongs to the reoviridae RNA-directed RNA polymerase family. As to quaternary structure, interacts with VP3 (Potential). Interacts with VP2; this interaction activates VP1. Interacts with NSP5; this interaction is probably necessary for the formation of functional virus factories. Interacts with NSP2; this interaction is weak. Mg(2+) serves as cofactor.

The protein resides in the virion. The enzyme catalyses RNA(n) + a ribonucleoside 5'-triphosphate = RNA(n+1) + diphosphate. Its function is as follows. RNA-directed RNA polymerase that is involved in both transcription and genome replication. Together with VP3 capping enzyme, forms an enzyme complex positioned near the channels situated at each of the five-fold vertices of the core. Following infection, the outermost layer of the virus is lost, leaving a double-layered particle (DLP) made up of the core and VP6 shell. VP1 then catalyzes the transcription of fully conservative plus-strand genomic RNAs that are extruded through the DLP's channels into the cytoplasm where they function as mRNAs for translation of viral proteins. One copy of each of the viral (+)RNAs is also recruited during core assembly, together with newly synthesized polymerase complexes and VP2. The polymerase of these novo-formed particles catalyzes the synthesis of complementary minus-strands leading to dsRNA formation. To do so, the polymerase specifically recognizes and binds 4 bases 5'-UGUG-3' in the conserved 3'-sequence of plus-strand RNA templates. VP2 presumably activates the autoinhibited VP1-RNA complex to coordinate packaging and genome replication. Once dsRNA synthesis is complete, the polymerase switches to the transcriptional mode, thus providing secondary transcription. The sequence is that of RNA-directed RNA polymerase from Rotavirus A (strain RVA/SA11-Patton/G3P[X]) (RV-A).